Consider the following 164-residue polypeptide: B-phycoerythrin alpha chain (164 aa).

The (2R,3E)-phycoerythrobilin site is built by cysteine 82 and cysteine 139.

Belongs to the phycobiliprotein family. As to quaternary structure, heteromer of 6 alpha, 6 beta and one gamma chain. In terms of processing, contains two covalently linked bilin chromophores.

The protein resides in the plastid. It localises to the chloroplast thylakoid membrane. Its function is as follows. Light-harvesting photosynthetic bile pigment-protein from the phycobiliprotein complex. The polypeptide is B-phycoerythrin alpha chain (cpeA) (Rhodella violacea (Red alga)).